The following is a 303-amino-acid chain: Aquaporin-7 (303 aa).

Topologically, residues 1–21 are cytoplasmic; that stretch reads MAPRSVLETIQSVLQKNMVRE. Ser-5 bears the Phosphoserine mark. The chain crosses the membrane as a helical span at residues 22 to 39; the sequence is FLAEFLSTYVMMVFGLGS. The Extracellular portion of the chain corresponds to 40-52; sequence VAHMVLGENSGSY. A helical transmembrane segment spans residues 53 to 70; sequence LGVNLGFGFGVTMGVHVA. Residues 71-74 lie on the Cytoplasmic side of the membrane; that stretch reads GGIS. The discontinuously helical intramembrane region spans 75–88; it reads GAHMNAAVTFTNCA. Residues 79–81 carry the NPA 1 motif; sequence NAA. Residues 89 to 96 are Cytoplasmic-facing; it reads LGRMTWKK. The helical transmembrane segment at 97-117 threads the bilayer; sequence FPVYVLGQFLGSFSAAATTYL. Residues 118-152 are Extracellular-facing; the sequence is IFYGAINHFAGGDLLVTGSKATANIFATYLPEYMT. Residues 153–173 form a helical membrane-spanning segment; that stretch reads LWRGFLDEAFVTGMLQLCLFA. Over 174 to 185 the chain is Cytoplasmic; that stretch reads ITDKKNSPALQG. A helical transmembrane segment spans residues 186-202; that stretch reads TEPLVIGILVTVLGVSL. At 203 to 206 the chain is on the extracellular side; sequence GMNS. An intramembrane region (discontinuously helical) is located at residues 207 to 220; it reads GYAINPSRDLPPRL. Residues 211–213 carry the NPA 2 motif; the sequence is NPS. Over 221 to 238 the chain is Extracellular; sequence FTFIAGWGKQVFRAGNNW. Residues 239 to 260 traverse the membrane as a helical segment; sequence WWVPVVAPLLGAYLGGIVYLGL. Residues 261-303 are Cytoplasmic-facing; the sequence is IHPSIPQDPQRLENFTARDQKVTASYKNAASANISGSVPLEHF.

The protein belongs to the MIP/aquaporin (TC 1.A.8) family. As to quaternary structure, homotetramer; each monomer provides an independent glycerol/water pore. Two homotetramers on opposing membranes can dimerize, forming a cell-cell junction. Interacts with PLIN1. Post-translationally, phosphorylation by PKA could prevent the interaction with PLIN1. In terms of tissue distribution, detected in proximal tubules in kidney. Detected in the capillary network between muscle fibers in skeletal muscle and heart, and in spermatids and on spermatozoa tails in testis and epididymis. Detected in white and brown adipose tissue, especially on small blood vessels (at protein level). Detected in kidney and white adipose tissue.

The protein localises to the cell membrane. It is found in the cytoplasmic vesicle membrane. It localises to the lipid droplet. It catalyses the reaction glycerol(in) = glycerol(out). The enzyme catalyses H2O(in) = H2O(out). The catalysed reaction is urea(in) = urea(out). Glycerol transport is regulated by pH, with the porin being permeable to glycerol at pH 7.4 but not at pH 5.5. Water permeability, however, is not influenced by pH. Functionally, aquaglyceroporins form homotetrameric transmembrane channels, with each monomer independently mediating glycerol and water transport across the plasma membrane along their osmotic gradient. Could also be permeable to urea. Mediates the efflux of glycerol, formed upon triglyceride hydrolysis, to avoid its accumulation in adipocytes and to make it available to other tissues. In the kidney, mediates the reabsorption of glycerol, preventing its loss in urine, again participating to energy homeostasis. In pancreatic beta cells, it also mediates the efflux of glycerol, regulating its intracellular levels. The polypeptide is Aquaporin-7 (Mus musculus (Mouse)).